The primary structure comprises 205 residues: Holliday junction branch migration complex subunit RuvA (205 aa).

Residues 1-64 (MIGRLRGVLI…EDAQLLYGFI (64 aa)) form a domain I region. Residues 65–143 (TKKERSLFRL…SLMEASVGSE (79 aa)) form a domain II region. The segment at 144 to 156 (REFVLQSNYSPAP) is flexible linker. The tract at residues 157 to 205 (TVNSAEEDAISALLSLGYKPPQASKAVSAAYKEGMDSETLIKAALKSML) is domain III.

This sequence belongs to the RuvA family. As to quaternary structure, homotetramer. Forms an RuvA(8)-RuvB(12)-Holliday junction (HJ) complex. HJ DNA is sandwiched between 2 RuvA tetramers; dsDNA enters through RuvA and exits via RuvB. An RuvB hexamer assembles on each DNA strand where it exits the tetramer. Each RuvB hexamer is contacted by two RuvA subunits (via domain III) on 2 adjacent RuvB subunits; this complex drives branch migration. In the full resolvosome a probable DNA-RuvA(4)-RuvB(12)-RuvC(2) complex forms which resolves the HJ.

It localises to the cytoplasm. In terms of biological role, the RuvA-RuvB-RuvC complex processes Holliday junction (HJ) DNA during genetic recombination and DNA repair, while the RuvA-RuvB complex plays an important role in the rescue of blocked DNA replication forks via replication fork reversal (RFR). RuvA specifically binds to HJ cruciform DNA, conferring on it an open structure. The RuvB hexamer acts as an ATP-dependent pump, pulling dsDNA into and through the RuvAB complex. HJ branch migration allows RuvC to scan DNA until it finds its consensus sequence, where it cleaves and resolves the cruciform DNA. The chain is Holliday junction branch migration complex subunit RuvA from Shewanella sp. (strain MR-4).